Consider the following 314-residue polypeptide: Olfactory receptor 5G29 (314 aa).

At Met-1 to Ile-25 the chain is on the extracellular side. A glycan (N-linked (GlcNAc...) asparagine) is linked at Asn-5. A helical membrane pass occupies residues Ala-26–Ile-46. Residues Thr-47 to Arg-54 are Cytoplasmic-facing. Residues Leu-55–Ser-75 form a helical membrane-spanning segment. Over Ser-76–Ala-99 the chain is Extracellular. Cys-97 and Cys-189 are oxidised to a cystine. The chain crosses the membrane as a helical span at residues Gln-100–Tyr-120. The Cytoplasmic segment spans residues Asp-121–Thr-133. Residues Leu-134–Ile-154 form a helical membrane-spanning segment. Residues Asn-155–Lys-196 lie on the Extracellular side of the membrane. A helical membrane pass occupies residues Val-197 to Ser-217. The Cytoplasmic portion of the chain corresponds to Tyr-218–Ala-237. The chain crosses the membrane as a helical span at residues Phe-238–Ile-258. The Extracellular segment spans residues Tyr-259 to Asn-271. A helical transmembrane segment spans residues Lys-272 to Leu-292. Residues Arg-293–Ala-312 lie on the Cytoplasmic side of the membrane.

The protein belongs to the G-protein coupled receptor 1 family.

It localises to the cell membrane. In terms of biological role, potential odorant receptor. This Mus musculus (Mouse) protein is Olfactory receptor 5G29.